We begin with the raw amino-acid sequence, 300 residues long: LysM and putative peptidoglycan-binding domain-containing protein 3 (300 aa).

Residues 1–216 (MAGRNQNRTA…PYYGADWGMG (216 aa)) lie on the Extracellular side of the membrane. 2 N-linked (GlcNAc...) asparagine glycosylation sites follow: N7 and N26. At S55 the chain carries Phosphoserine. The 45-residue stretch at 65-109 (LTKDIQEGDTLNAVALQYCCTVADIKRVNNLISDQDFFALRSIKI) folds into the LysM domain. The interval 136–157 (PYFQEQDTVPANDSPSSSESAG) is disordered. The span at 140–156 (EQDTVPANDSPSSSESA) shows a compositional bias: polar residues. N-linked (GlcNAc...) asparagine glycosylation occurs at N199. Residues 217–237 (WWTAVVIMLIVGIITPVFYLL) traverse the membrane as a helical segment. The Cytoplasmic segment spans residues 238–300 (YYEILAKVDV…LYRQDPQARD (63 aa)). The interval 253-300 (VDSSHLHPGLTPPSHHREMGNAIGPTKGIPVGQQDDHRLYRQDPQARD) is disordered. Residues 286–300 (QDDHRLYRQDPQARD) show a composition bias toward basic and acidic residues.

The protein resides in the cell membrane. The protein localises to the golgi apparatus. In terms of biological role, essential for Golgi structural integrity. This Rattus norvegicus (Rat) protein is LysM and putative peptidoglycan-binding domain-containing protein 3 (Lysmd3).